Reading from the N-terminus, the 465-residue chain is Hydroxyacid-oxoacid transhydrogenase, mitochondrial (465 aa).

The protein belongs to the iron-containing alcohol dehydrogenase family. Hydroxyacid-oxoacid transhydrogenase subfamily.

The protein localises to the mitochondrion. It catalyses the reaction (S)-3-hydroxybutanoate + 2-oxoglutarate = (R)-2-hydroxyglutarate + acetoacetate. The enzyme catalyses 4-hydroxybutanoate + 2-oxoglutarate = (R)-2-hydroxyglutarate + succinate semialdehyde. Functionally, catalyzes the cofactor-independent reversible oxidation of gamma-hydroxybutyrate (GHB) to succinic semialdehyde (SSA) coupled to reduction of 2-ketoglutarate (2-KG) to D-2-hydroxyglutarate (D-2-HG). L-3-hydroxybutyrate (L-3-OHB) is also a substrate for HOT when using 2-KG as hydrogen acceptor, resulting in the formation of D-2-HG. The sequence is that of Hydroxyacid-oxoacid transhydrogenase, mitochondrial from Caenorhabditis briggsae.